The chain runs to 413 residues: Serine hydroxymethyltransferase (413 aa).

Residues Leu117 and 121-123 (GHL) contribute to the (6S)-5,6,7,8-tetrahydrofolate site. Residue Lys226 is modified to N6-(pyridoxal phosphate)lysine. (6S)-5,6,7,8-tetrahydrofolate contacts are provided by residues Glu239 and 349–351 (SPF).

It belongs to the SHMT family. As to quaternary structure, homodimer. The cofactor is pyridoxal 5'-phosphate.

It localises to the cytoplasm. The enzyme catalyses (6R)-5,10-methylene-5,6,7,8-tetrahydrofolate + glycine + H2O = (6S)-5,6,7,8-tetrahydrofolate + L-serine. Its pathway is one-carbon metabolism; tetrahydrofolate interconversion. It participates in amino-acid biosynthesis; glycine biosynthesis; glycine from L-serine: step 1/1. Its function is as follows. Catalyzes the reversible interconversion of serine and glycine with tetrahydrofolate (THF) serving as the one-carbon carrier. This reaction serves as the major source of one-carbon groups required for the biosynthesis of purines, thymidylate, methionine, and other important biomolecules. Also exhibits THF-independent aldolase activity toward beta-hydroxyamino acids, producing glycine and aldehydes, via a retro-aldol mechanism. In Bacillus cereus (strain AH187), this protein is Serine hydroxymethyltransferase.